The chain runs to 204 residues: SOSS complex subunit B homolog (204 aa).

Positions 24–94 form a DNA-binding region, OB; sequence IVLEVGVATV…TLYSGKNGEV (71 aa). Positions 115–204 are disordered; the sequence is RAEQQAVANP…GRGGLKGERR (90 aa). Low complexity-rich tracts occupy residues 122–131 and 139–183; these read ANPAATPAGL and GLPA…QTTT. A compositionally biased stretch (gly residues) spans 187–198; it reads TRGGRGGGGRGG.

Belongs to the SOSS-B family.

In Drosophila melanogaster (Fruit fly), this protein is SOSS complex subunit B homolog.